The primary structure comprises 208 residues: Floral homeotic protein PISTILLATA (208 aa).

Residues 3 to 57 enclose the MADS-box domain; the sequence is RGKIEIKRIENANNRVVTFSKRRNGLVKKAKEITVLCDAKVALIIFASNGKMIDY. Residues 75–117 are a coiled coil; it reads SGKKLWDAKHENLSNEIDRIKKENDSLQLELRHLKGEDIQSLN. One can recognise a K-box domain in the interval 84 to 170; that stretch reads HENLSNEIDR…TFQLQQQEMA (87 aa).

As to quaternary structure, forms a heterodimer with APETALA3, capable of binding to CArG-box sequences. AP3/PI heterodimer binds AP1 or SEP3 to form a ternary complex.

The protein localises to the nucleus. Its function is as follows. Probable transcription factor involved in the genetic control of flower development. Is required for normal development of petals and stamens in the wild-type flower. Forms a heterodimer with APETALA3 that is required for autoregulation of both AP3 and PI genes. AP3/PI heterodimer interacts with APETALA1 or SEPALLATA3 to form a ternary complex that could be responsible for the regulation of the genes involved in the flower development. AP3/PI heterodimer activates the expression of NAP. AP3/PI prevents GATA22/GNL and GATA21/GNC expression. The protein is Floral homeotic protein PISTILLATA (PI) of Arabidopsis thaliana (Mouse-ear cress).